Consider the following 680-residue polypeptide: tRNA 5-methylaminomethyl-2-thiouridine biosynthesis bifunctional protein MnmC (680 aa).

A tRNA (mnm(5)s(2)U34)-methyltransferase region spans residues 1 to 251 (MSQNHILPQN…KREMIAGTLT (251 aa)). Positions 277 to 680 (IGGGVASAAL…RLLKGKPLDI (404 aa)) are FAD-dependent cmnm(5)s(2)U34 oxidoreductase.

This sequence in the N-terminal section; belongs to the methyltransferase superfamily. tRNA (mnm(5)s(2)U34)-methyltransferase family. It in the C-terminal section; belongs to the DAO family. The cofactor is FAD.

Its subcellular location is the cytoplasm. The enzyme catalyses 5-aminomethyl-2-thiouridine(34) in tRNA + S-adenosyl-L-methionine = 5-methylaminomethyl-2-thiouridine(34) in tRNA + S-adenosyl-L-homocysteine + H(+). Functionally, catalyzes the last two steps in the biosynthesis of 5-methylaminomethyl-2-thiouridine (mnm(5)s(2)U) at the wobble position (U34) in tRNA. Catalyzes the FAD-dependent demodification of cmnm(5)s(2)U34 to nm(5)s(2)U34, followed by the transfer of a methyl group from S-adenosyl-L-methionine to nm(5)s(2)U34, to form mnm(5)s(2)U34. This is tRNA 5-methylaminomethyl-2-thiouridine biosynthesis bifunctional protein MnmC from Aliivibrio fischeri (strain ATCC 700601 / ES114) (Vibrio fischeri).